The sequence spans 99 residues: Protein AC150 (99 aa).

The Chitin-binding type-2 domain occupies 38-96; it reads GFSCYNKPIGVNFPHPTRCDAFYMCVGLNQKLELICPEGFEFDPDVKNCVPISDYGCTA. Cys73 and Cys86 are disulfide-bonded.

The protein localises to the host nucleus. Its subcellular location is the virion. In terms of biological role, plays a role in primary oral infection of the host. The sequence is that of Protein AC150 from Autographa californica nuclear polyhedrosis virus (AcMNPV).